The chain runs to 465 residues: Glutamate--tRNA ligase (465 aa).

The 'HIGH' region motif lies at 8–18; sequence PSPTGHLHIGG. 4 residues coordinate Zn(2+): cysteine 97, cysteine 99, cysteine 124, and glutamate 126. The 'KMSKS' region signature appears at 234–238; it reads RLSKR. Lysine 237 lines the ATP pocket.

It belongs to the class-I aminoacyl-tRNA synthetase family. Glutamate--tRNA ligase type 1 subfamily. As to quaternary structure, monomer. Requires Zn(2+) as cofactor.

It localises to the cytoplasm. The enzyme catalyses tRNA(Glu) + L-glutamate + ATP = L-glutamyl-tRNA(Glu) + AMP + diphosphate. Its function is as follows. Catalyzes the attachment of glutamate to tRNA(Glu) in a two-step reaction: glutamate is first activated by ATP to form Glu-AMP and then transferred to the acceptor end of tRNA(Glu). In Thermodesulfovibrio yellowstonii (strain ATCC 51303 / DSM 11347 / YP87), this protein is Glutamate--tRNA ligase.